The following is a 181-amino-acid chain: UPF0200 protein Ta0179 (181 aa).

Residue 6–13 (GMPGAGKD) participates in ATP binding.

It belongs to the UPF0200 family.

This Thermoplasma acidophilum (strain ATCC 25905 / DSM 1728 / JCM 9062 / NBRC 15155 / AMRC-C165) protein is UPF0200 protein Ta0179.